A 76-amino-acid polypeptide reads, in one-letter code: Large ribosomal subunit protein bL31 (76 aa).

Belongs to the bacterial ribosomal protein bL31 family. Type A subfamily. As to quaternary structure, part of the 50S ribosomal subunit.

Functionally, binds the 23S rRNA. In Pelagibacter ubique (strain HTCC1062), this protein is Large ribosomal subunit protein bL31 (rpmE).